We begin with the raw amino-acid sequence, 336 residues long: Torsin-1B (336 aa).

Residues 1–24 (MLRAGWLRGAAALALLLAARVVAA) form the signal peptide. Asn-64 carries an N-linked (GlcNAc...) asparagine glycan. Residue 109–116 (GWAGTGKN) coordinates ATP. An N-linked (GlcNAc...) asparagine glycan is attached at Asn-165.

It belongs to the ClpA/ClpB family. Torsin subfamily. In terms of assembly, homohexamer. Interacts with TOR1A; the interaction may be specific of neural tissues. Interacts with TOR1AIP1; TOR1AIP1 is required for TOR1B location on the nuclear membrane. Interacts (ATP-bound) with TOR1AIP2; important for endoplasmic reticulum integrity. N-glycosylated. Widely expressed with low levels in brain.

It is found in the endoplasmic reticulum lumen. It localises to the nucleus membrane. It carries out the reaction ATP + H2O = ADP + phosphate + H(+). May serve as a molecular chaperone assisting in the proper folding of secreted and/or membrane proteins. Plays a role in non-neural cells nuclear envelope and endoplasmic reticulum integrity. May have a redundant function with TOR1A in non-neural tissues. In Homo sapiens (Human), this protein is Torsin-1B (TOR1B).